Here is a 55-residue protein sequence, read N- to C-terminus: MLSKSLISKSLLFNSNNNNNTINESSIIIVQTQLNTITNKSTTSTFYYTRPQWGL.

This is an uncharacterized protein from Dictyostelium discoideum (Social amoeba).